Consider the following 380-residue polypeptide: Phthiodiolone/phenolphthiodiolone dimycocerosates ketoreductase (380 aa).

This sequence belongs to the mer family. Phthiodiolone/phenolphthiodiolone dimycocerosates ketoreductase subfamily.

In terms of biological role, catalyzes the reduction of the keto moiety of phthiodiolone dimycocerosates (DIM B) and glycosylated phenolphthiodiolone dimycocerosates to form the intermediate compounds phthiotriol and glycosylated phenolphthiotriol dimycocerosates during phthiocerol dimycocerosates (DIM A) and glycosylated phenolphthiocerol dimycocerosates (PGL) biosynthesis. This chain is Phthiodiolone/phenolphthiodiolone dimycocerosates ketoreductase, found in Mycobacterium sp. (strain JLS).